The primary structure comprises 350 residues: MFGLKRNAVIGLNLYCGGAGLGAGSGGATRPGGRLLATEKEASARREIGGGEAGAVIGGSAGASPPSTLTPDSRRVARPPPIGAEVPDVTATPARLLFFAPTRRAAPLEEMEAPAADAIMSPEEELDGYEPEPLGKRPAVLPLLELVGESGNNTSTDGSLPSTPPPAEEEEDELYRQSLEIISRYLREQATGAKDTKPMGRSGATSRKALETLRRVGDGVQRNHETAFQGMLRKLDIKNEDDVKSLSRVMIHVFSDGVTNWGRIVTLISFGAFVAKHLKTINQESCIEPLAESITDVLVRTKRDWLVKQRGWDGFVEFFHVEDLEGGIRNVLLAFAGVAGVGAGLAYLIR.

Glycyl lysine isopeptide (Lys-Gly) (interchain with G-Cter in ubiquitin) cross-links involve residues Lys-5 and Lys-40. The segment at 47-87 (EIGGGEAGAVIGGSAGASPPSTLTPDSRRVARPPPIGAEVP) is disordered. The segment covering 50 to 61 (GGEAGAVIGGSA) has biased composition (gly residues). A PEST-like region spans residues 104 to 175 (RAAPLEEMEA…PAEEEEDELY (72 aa)). Ser-121 carries the phosphoserine modification. A Glycyl lysine isopeptide (Lys-Gly) (interchain with G-Cter in ubiquitin) cross-link involves residue Lys-136. Residues 148–171 (GESGNNTSTDGSLPSTPPPAEEEE) form a disordered region. Polar residues predominate over residues 150-161 (SGNNTSTDGSLP). Position 159 is a phosphoserine; by GSK3-alpha and GSK3-beta (Ser-159). Ser-162 carries the post-translational modification Phosphoserine. Thr-163 bears the Phosphothreonine; by MAPK mark. Glycyl lysine isopeptide (Lys-Gly) (interchain with G-Cter in ubiquitin) cross-links involve residues Lys-194 and Lys-197. A BH3 motif is present at residues 209-223 (ALETLRRVGDGVQRN). Positions 252–272 (HVFSDGVTNWGRIVTLISFGA) match the BH1 motif. The BH2 motif lies at 304 to 319 (DWLVKQRGWDGFVEFF). A helical membrane pass occupies residues 328–348 (IRNVLLAFAGVAGVGAGLAYL).

It belongs to the Bcl-2 family. As to quaternary structure, interacts with HIF3A (via C-terminus domain). Interacts with BAD, BOK, BIK and BMF. Interacts with PMAIP1. Interacts with BBC3. Isoform 1 interacts with BAX, BAK1 and TPT1. Heterodimer of isoform 1 and isoform 2. Homodimers of isoform 1 or isoform 2 are not detected. Isoform 2 does not interact with pro-apoptotic BCL2-related proteins. Interacts with RTL10/BOP. Interacts with BCL2L11; may sequester BCL2L11 to prevent its pro-apoptotic activity. Interacts with GIMAP5 and HSPA8/HSC70; the interaction between HSPA8 and MCL1 is impaired in the absence of GIMAP5. Cleaved by CASP3 during apoptosis. In intact cells cleavage occurs preferentially after Asp-127, yielding a pro-apoptotic 28 kDa C-terminal fragment. Post-translationally, rapidly degraded in the absence of phosphorylation on Thr-163 in the PEST region. In terms of processing, phosphorylated on Ser-159, by GSK3, in response to IL3/interleukin-3 withdrawal. Phosphorylation at Ser-159 induces ubiquitination and proteasomal degradation, abrogating the anti-apoptotic activity. Treatment with taxol or okadaic acid induces phosphorylation on additional sites. Ubiquitinated. Ubiquitination is induced by phosphorylation at Ser-159. Deubiquitinated by USP20; leading to increased stability.

It is found in the membrane. The protein localises to the cytoplasm. Its subcellular location is the mitochondrion. It localises to the nucleus. The protein resides in the nucleoplasm. Involved in the regulation of apoptosis versus cell survival, and in the maintenance of viability but not of proliferation. Mediates its effects by interactions with a number of other regulators of apoptosis. Isoform 1 inhibits apoptosis. Isoform 2 promotes apoptosis. The chain is Induced myeloid leukemia cell differentiation protein Mcl-1 (MCL1) from Homo sapiens (Human).